Consider the following 268-residue polypeptide: MVLTRRAREVALTQHIGVSAETDRAVVPKLRQAYDSLVCGRRRLGAIGAEIENAVAHQRALGLDTPAGARNFSRFLATKAHDITRVLAATAAESQAGAARLRSLASSYQAVGFGPKPQEPPPDPVPFPPYQPKVWAACRARGQDPDKVVRTFHHAPMSARFRSLPAGDSVLYCGNDKYGLLHIQAKHGRQWHDIADARWPSAGNWRYLADYAIGATLAYPERVEYNQDNDTFAVYRRMSLPDGRYVFTTRVIISARDGKIITAFPQTT.

To M.tuberculosis Rv0025 and Rv0026.

This is an uncharacterized protein from Mycobacterium tuberculosis (strain CDC 1551 / Oshkosh).